The chain runs to 176 residues: Crossover junction endodeoxyribonuclease RuvC (176 aa).

Active-site residues include Asp12, Glu72, and Asp144. Mg(2+) contacts are provided by Asp12, Glu72, and Asp144.

It belongs to the RuvC family. Homodimer which binds Holliday junction (HJ) DNA. The HJ becomes 2-fold symmetrical on binding to RuvC with unstacked arms; it has a different conformation from HJ DNA in complex with RuvA. In the full resolvosome a probable DNA-RuvA(4)-RuvB(12)-RuvC(2) complex forms which resolves the HJ. The cofactor is Mg(2+).

It localises to the cytoplasm. It carries out the reaction Endonucleolytic cleavage at a junction such as a reciprocal single-stranded crossover between two homologous DNA duplexes (Holliday junction).. The RuvA-RuvB-RuvC complex processes Holliday junction (HJ) DNA during genetic recombination and DNA repair. Endonuclease that resolves HJ intermediates. Cleaves cruciform DNA by making single-stranded nicks across the HJ at symmetrical positions within the homologous arms, yielding a 5'-phosphate and a 3'-hydroxyl group; requires a central core of homology in the junction. The consensus cleavage sequence is 5'-(A/T)TT(C/G)-3'. Cleavage occurs on the 3'-side of the TT dinucleotide at the point of strand exchange. HJ branch migration catalyzed by RuvA-RuvB allows RuvC to scan DNA until it finds its consensus sequence, where it cleaves and resolves the cruciform DNA. The chain is Crossover junction endodeoxyribonuclease RuvC from Methylocella silvestris (strain DSM 15510 / CIP 108128 / LMG 27833 / NCIMB 13906 / BL2).